The chain runs to 1888 residues: MNSFLLLDHVSDSQDSGSEWSNTHGSLISQRGNEYDGITPATKEKNQNKLEILNNETTIGSTKSSVSSLPELNRNVSFEKSDQNLAETKREEENKRTEVFKKDAEHEAVVVKRDFRPRRPEQTRPYTYDFLRHQIEFKRIGLVPITVPHGFSSDRSITSKSSHKPVNVIVRNRASSRKPPLTSTHRFRRYGAVISDSDDDESNTEQDHSKESNLNTADNDLALSSTIEGKKTSTSKEALESESLLSDSDQSMTNISSNSTVSDLNLKTLKKRLRGVLPPSFLTLQEKKKLENRGVKKKTSLHKSVIEGEKIKGVARRKLHPRSTAKLSSELGNEISDSDNSISTPTPTDDSRFDTSEFLDSISRDNGWLKEDVVDQLWLPKRSLSALKKSSSLTSENPFQLNVAANAVSTIPVYRTTKTKMKKNRFKYVEVEKLPDLILESYGKKAPKFLRVFARSSSHIPKMIRRKRQMDSKKYFSFDKESDRQVIDQVLSDWYSGKHELVQQSHSYKKPSDSKSVGGNIFSVNSKKHSVNINAKTAANNGLSHLQNFSEELLKKRKLFSSLFSNNVSYKKSKKLKRTHTVHDKCQKVAKLDHYIRDNIELNSKEREHDCYEGTLAVPQVNTEIRKSSRKQKAQRFIRDDFDTVFFQSSSNPNYFTDVNPFWNIGIWSTTFNVITFRPGLSLPNNSFIKTQGLNSILQLDIVTHPFKSVYAFSCLFNIQDDVFKTFEKLKDTFETVLENLPYFTNSETVDLYNLLSFCSAFILHSQVSMGLVNLASSFLETYALVNDRVSSISGLNRSQLVEKIAVLFQTFQVVFYCEFELGNQQNINKVSWLASDLISKLLSAGQSGLLECYRNLRIQASDTTVIDTLFLESWSILNHILFHVYKKKYALWEQVNSFFDLQKKELSILEMEKIWYVIMTLNPVFQIGLNGTTHSPGNNSFWPLIIRVSESAFKMHKDGHNVKVVERYLRTVFLRIHFLISEWRWEDVAQILFLIFDFFSHRKFNDLSSEISEDTPTDFPDFVKSLDRPPNLHVTALDTCFVIYLKVILISISRLRQVDENTNSIKRIVSRLQPLHSRQYTRESPFSIKDFMSLEHTHTLLICLYWAAPENCRPSLNRIRDIVIVDNSHLKARLISLKAWLHLMKYVIKEGTDYELAQGMEWFNSILKVTFDEYLALFSNGTSVGEMQLAEYSKHQLENALIVAFHSLQDLIPNSSVYISRINVLVTEQSCRRILKDSHFFPPRVTLECILFLKKFLQYQSNTEPPKVTVVGSTSHDSQDAYFDSDVLDDNTLILEQEKFERKYEVAQILRTFVSPFLYQTISYLVGNDEDKENYIRILLLPLMECMAICASFAVEAKINDWSYYIDFGSESWERIRNTPLKRSLSTTFYSFLISYNDSFIKKHEEKVLTVWFESLGALDEDHAAQFTILLLQKNLKNPILLNLPISVKIEEISINYFKSVHLNLLTAVFCNMAKLYADAKTNGFASSQYLQSLFIHYLSSLLSSMQHSYETNGHSSDTHSLFVINSQRVVGDILQYCSQFANDRNLPALRYFMDSTKFPQPPERLEYTALRLRSYARKTLTNSASQNALFSFLKANFDVALLEQKQTETSNLLRLAMGFHNQNSSSKWDVEISSLRKFCVKELLLSYLGEGSLAAMFYSLLLLEGLSRTYNSFRRIYLQPYIQQLLCEEISVFVADLEKYALLYENKRPLLSGRIYYLISSFVAISMTNKTSGLPSSLICNLQNFLARIARDFLLELCWNIEGSEFPPPYNTVDCRSKFVKTIQQHCSADWYDNVTNIVHKSRKKKLVLPSQVEQEEEYWSGLMEVTIQIWKHDKGFLEPELDRFLNVICSYAPDMSGLPTKIKCFLDKIGYSWMTEENDFDIVLF.

Disordered stretches follow at residues 12–34 (DSQD…RGNE), 151–258 (FSSD…ISSN), and 316–354 (RRKL…SRFD). 3 stretches are compositionally biased toward polar residues: residues 13 to 32 (SQDS…SQRG), 212 to 227 (SNLN…SSTI), and 338 to 348 (SDNSISTPTPT).

This sequence belongs to the MMS22 family.

It is found in the nucleus. Involved in protection against replication-dependent DNA damage. May act by restoring active replication forks, repairing unusual DNA structures, and/or preventing aberrant DNA rearrangement at arrested replication forks. This Schizosaccharomyces pombe (strain 972 / ATCC 24843) (Fission yeast) protein is Protein mms22 (mus7).